The primary structure comprises 393 residues: PGA synthase CapB (393 aa).

The cofactor is Mn(2+).

Functionally, catalyzes the biosynthesis of PGA (gamma-polyglutamic acid) from L-glutamate. Both the 44-kDa and the 33-kDa forms are required for PGA synthesis. This chain is PGA synthase CapB (capB), found in Bacillus subtilis (strain 168).